The primary structure comprises 58 residues: Small ribosomal subunit protein bS21 (58 aa).

The segment covering Val-32–Ser-42 has biased composition (basic and acidic residues). The tract at residues Val-32 to Lys-58 is disordered. Residues Val-43–Lys-58 are compositionally biased toward basic residues.

The protein belongs to the bacterial ribosomal protein bS21 family.

The sequence is that of Small ribosomal subunit protein bS21 from Clostridium botulinum (strain Okra / Type B1).